The sequence spans 331 residues: tRNA N6-adenosine threonylcarbamoyltransferase (331 aa).

Fe cation-binding residues include His-109, His-113, and Tyr-130. Substrate is bound by residues 130–134 (YLSGG), Asp-162, Asp-183, and Ser-262. Residue Asp-290 coordinates Fe cation.

It belongs to the KAE1 / TsaD family. Requires Fe(2+) as cofactor.

The protein resides in the cytoplasm. It catalyses the reaction L-threonylcarbamoyladenylate + adenosine(37) in tRNA = N(6)-L-threonylcarbamoyladenosine(37) in tRNA + AMP + H(+). Its function is as follows. Required for the formation of a threonylcarbamoyl group on adenosine at position 37 (t(6)A37) in tRNAs that read codons beginning with adenine. Is probably involved in the transfer of the threonylcarbamoyl moiety of threonylcarbamoyl-AMP (TC-AMP) to the N6 group of A37. This is tRNA N6-adenosine threonylcarbamoyltransferase from Saccharolobus islandicus (strain Y.G.57.14 / Yellowstone #1) (Sulfolobus islandicus).